Reading from the N-terminus, the 134-residue chain is Small ribosomal subunit protein uS9 (134 aa).

The segment at Glu-114 to Arg-134 is disordered. The span at Tyr-120–Arg-134 shows a compositional bias: basic residues.

Belongs to the universal ribosomal protein uS9 family.

This chain is Small ribosomal subunit protein uS9, found in Thermotoga sp. (strain RQ2).